The chain runs to 191 residues: Fe/S biogenesis protein NfuA (191 aa).

Positions 149 and 152 each coordinate [4Fe-4S] cluster.

It belongs to the NfuA family. Homodimer. Requires [4Fe-4S] cluster as cofactor.

Its function is as follows. Involved in iron-sulfur cluster biogenesis. Binds a 4Fe-4S cluster, can transfer this cluster to apoproteins, and thereby intervenes in the maturation of Fe/S proteins. Could also act as a scaffold/chaperone for damaged Fe/S proteins. This Pectobacterium carotovorum subsp. carotovorum (strain PC1) protein is Fe/S biogenesis protein NfuA.